The primary structure comprises 494 residues: MFLAKSIVCLALLAVANAQFNTNYASGRSGMVHLFEWKWDDIAAECENFLGPYGYAGVQVSPVNENAVKDSRPWWERYQPISYKLVTRSGNEEQFASMVRRCNNVGVRIYVDVVFNHMAANGGTYGTGGSTASPSSKSYPGVPFSSLDFNPTCAISNYNDANQVRNCELVGLRDLNQGNSYVQEKIVEFLNHLIDLGVAGFRVDAAKHMWPADLGVIYGSLKNLNTDHGFESGAKAYIVQEVIDMGGEAISKSEYTGLGAITEFRHSDSIGKAFRGKNQLQYLVNWGVSWGFAASDRSLVFVDNHDNQRGHGAGGADVLTYKVPKQYKMASAFMLAHPFGTPRVMSSFSFTDTDQGPPTTDGQNIASPSFNSDNSCSGGWVCEHRWKQIYNMVGFRNAVGSDAIQNWWDNGSNQIAFSRGSKGFVAFNNDNYDLNSSVQTGLPAGTYCDVISGSKSGSSCTGKTVTVGSDGRANISIGSSEDDGVLAIHVNAKL.

The first 18 residues, 1–18 (MFLAKSIVCLALLAVANA), serve as a signal peptide directing secretion. An intrachain disulfide couples Cys46 to Cys102. The Ca(2+) site is built by Asn116, Arg165, and Asp174. Cys153 and Cys167 are oxidised to a cystine. Arg202 contributes to the chloride binding site. The active-site Nucleophile is the Asp204. Ca(2+) is bound at residue His208. Glu241 acts as the Proton donor in catalysis. Chloride-binding residues include Asn304 and Arg343. The interval 350–370 (FTDTDQGPPTTDGQNIASPSF) is disordered. Residues 351-363 (TDTDQGPPTTDGQ) show a composition bias toward low complexity. Cystine bridges form between Cys376–Cys382 and Cys448–Cys460.

Belongs to the glycosyl hydrolase 13 family. Monomer. It depends on Ca(2+) as a cofactor. The cofactor is chloride.

The enzyme catalyses Endohydrolysis of (1-&gt;4)-alpha-D-glucosidic linkages in polysaccharides containing three or more (1-&gt;4)-alpha-linked D-glucose units.. This is Alpha-amylase 1 (Amy35) from Drosophila ananassae (Fruit fly).